A 512-amino-acid polypeptide reads, in one-letter code: 2,3-bisphosphoglycerate-independent phosphoglycerate mutase (512 aa).

Mn(2+) contacts are provided by Asp12 and Ser62. The active-site Phosphoserine intermediate is the Ser62. Residues His123, 153 to 154 (RD), Arg185, Arg191, 260 to 263 (RPDR), and Lys333 contribute to the substrate site. Mn(2+) is bound by residues Asp400, His404, Asp441, His442, and His460.

This sequence belongs to the BPG-independent phosphoglycerate mutase family. In terms of assembly, monomer. Mn(2+) is required as a cofactor.

It catalyses the reaction (2R)-2-phosphoglycerate = (2R)-3-phosphoglycerate. It functions in the pathway carbohydrate degradation; glycolysis; pyruvate from D-glyceraldehyde 3-phosphate: step 3/5. Catalyzes the interconversion of 2-phosphoglycerate and 3-phosphoglycerate. This Clostridium perfringens (strain 13 / Type A) protein is 2,3-bisphosphoglycerate-independent phosphoglycerate mutase.